Consider the following 143-residue polypeptide: HTH-type transcriptional regulator MntR (143 aa).

The HTH dtxR-type domain maps to 1 to 63 (MPTPSMEDYL…YERYRGLVLT (63 aa)). Positions 8, 11, 77, 99, 102, and 103 each coordinate Mn(2+).

Belongs to the DtxR/MntR family. As to quaternary structure, homodimer.

Its subcellular location is the cytoplasm. Its activity is regulated as follows. DNA binding is strongly activated by Mn(2+). Central regulator of manganese homeostasis. This Shouchella clausii (strain KSM-K16) (Alkalihalobacillus clausii) protein is HTH-type transcriptional regulator MntR.